The sequence spans 283 residues: F-box only protein 27 (283 aa).

Positions 1-23 (MGASVSRGRAARVPAPEPEPEEA) are disordered. The 48-residue stretch at 23–70 (ALDLSQLPPELLLVVLSHVPPRTLLGRCRQVCRGWRALVDGQALWLLI) folds into the F-box domain. Residues 104–280 (FCARRPIGRN…VTNSSVIVRV (177 aa)) form the FBA domain.

As to quaternary structure, part of a SCF (SKP1-cullin-F-box) protein ligase complex. Interacts with SKP1 and CUL1. Predominantly expressed in brain, heart and kidney. Expressed at lower levels in liver and lung.

Functionally, substrate-recognition component of the SCF (SKP1-CUL1-F-box protein)-type E3 ubiquitin ligase complex. Able to recognize and bind denatured glycoproteins, which are modified with complex-type oligosaccharides. The sequence is that of F-box only protein 27 (FBXO27) from Homo sapiens (Human).